Here is an 87-residue protein sequence, read N- to C-terminus: uncharacterized protein (87 aa).

This sequence to A.fulgidus AF_0255 and AF_1348.

This is an uncharacterized protein from Archaeoglobus fulgidus (strain ATCC 49558 / DSM 4304 / JCM 9628 / NBRC 100126 / VC-16).